Consider the following 587-residue polypeptide: Sedolisin (587 aa).

The N-terminal stretch at 1–32 (MKSSAAKQTVLCLNRYAVVALPLAIASFAAFG) is a signal peptide. A propeptide spans 33–215 (ASPASTLWAP…VGERSAAKTL (183 aa)) (removed in mature form). The Peptidase S53 domain maps to 219–583 (TAKGHNPTEF…AKLSAYIRSN (365 aa)). A disordered region spans residues 276 to 295 (TIQTGSSNGDYSDDQQGQGE). Active-site charge relay system residues include E295 and D299. The cysteines at positions 352 and 391 are disulfide-linked. S502 acts as the Charge relay system in catalysis. 5 residues coordinate Ca(2+): D543, V544, G559, G561, and D563. A propeptide spans 586–587 (GH) (removed in mature form).

Ca(2+) serves as cofactor. Post-translationally, autocatalytically processed.

Its subcellular location is the periplasm. It catalyses the reaction Hydrolysis of the B chain of insulin at 13-Glu-|-Ala-14, 15-Leu-|-Tyr-16 and 25-Phe-|-Tyr-26 and angiotensin I at 4-Tyr-|-Ile-5. A good synthetic substrate is Lys-Pro-Ile-Glu-Phe-|-Phe(NO2)-Arg-Leu.. Its activity is regulated as follows. Inhibited by 1,2-epoxy-3-(p-nitrophenoxy)propane (EPNP), but not by carboxyl proteinase inhibitors, such as pepstatin, pepstatin Ac (S-PI) and diazoacetyl-DL-norleucine methyl ester (DAN). Inhibited by tyrostatin, pseudo-tyrostatin, AcIPF, AcIAF, chymostatin and pseudo-iodotyrostatin. In terms of biological role, pepstatin-insensitive serine-carboxyl proteinase. In vitro can hydrolyze various synthetic peptides. Also shows activity on acid-denatured hemoglobin and on casein. This Pseudomonas sp. (strain 101) (Achromobacter parvulus T1) protein is Sedolisin (pcp).